The following is a 152-amino-acid chain: Large ribosomal subunit protein bL9 (152 aa).

Belongs to the bacterial ribosomal protein bL9 family.

Its function is as follows. Binds to the 23S rRNA. This chain is Large ribosomal subunit protein bL9, found in Saccharophagus degradans (strain 2-40 / ATCC 43961 / DSM 17024).